A 403-amino-acid polypeptide reads, in one-letter code: Formin-like protein 21b (403 aa).

The 380-residue stretch at 1–380 (MELLFTATLL…KAAKEAEMEK (380 aa)) folds into the FH2 domain. Residues 373–403 (AKEAEMEKTKKRVSLTNKKASGVGEEESCLI) form a disordered region.

This sequence belongs to the formin-like family. Class-II subfamily.

The chain is Formin-like protein 21b (FH21B) from Arabidopsis thaliana (Mouse-ear cress).